A 757-amino-acid chain; its full sequence is RNA-directed RNA polymerase catalytic subunit (757 aa).

Residues 50-82 (SEKGKWTTNTETGAPQLNPIDGPLPEDNEPSGY) are disordered. Over residues 55 to 64 (WTTNTETGAP) the composition is skewed to polar residues. Short sequence motifs (nuclear localization signal) lie at residues 187–195 (RKRRVRDNM) and 203–216 (RTIG…NKKS). Positions 249–256 (RGFVYFVE) are promoter-binding site. Residues 286–483 (VRKMMTNSQD…GINMSKKKSY (198 aa)) form the RdRp catalytic domain.

This sequence belongs to the influenza viruses polymerase PB1 family. In terms of assembly, influenza RNA polymerase is composed of three subunits: PB1, PB2 and PA. Interacts (via N-terminus) with PA (via C-terminus). Interacts (via C-terminus) with PB2 (via N-terminus); this interaction is essential for transcription initiation. In terms of processing, phosphorylated by host PRKCA.

Its subcellular location is the host nucleus. The protein resides in the host cytoplasm. It catalyses the reaction RNA(n) + a ribonucleoside 5'-triphosphate = RNA(n+1) + diphosphate. In terms of biological role, RNA-dependent RNA polymerase which is responsible for replication and transcription of virus RNA segments. The transcription of viral mRNAs occurs by a unique mechanism called cap-snatching. 5' methylated caps of cellular mRNAs are cleaved after 10-13 nucleotides by PA. In turn, these short capped RNAs are used as primers by PB1 for transcription of viral mRNAs. During virus replication, PB1 initiates RNA synthesis and copy vRNA into complementary RNA (cRNA) which in turn serves as a template for the production of more vRNAs. This Influenza A virus (strain A/Silky Chicken/Hong Kong/SF189/2001 H5N1 genotype A) protein is RNA-directed RNA polymerase catalytic subunit.